Here is a 230-residue protein sequence, read N- to C-terminus: Agamous-like MADS-box protein AGL11 (230 aa).

The MADS-box domain occupies 3–57; the sequence is RGKIEIKRIENSTNRQVTFCKRRNGLLKKAYELSVLCDAEVALIVFSTRGRLYEY. Positions 87-177 constitute a K-box domain; it reads AAYYQQESAK…RTKVAEVERY (91 aa). The disordered stretch occupies residues 211-230; it reads SGSGNGGSYSDPDKKILHLG. The segment covering 221-230 has biased composition (basic and acidic residues); it reads DPDKKILHLG.

In terms of assembly, interacts with AGL15 and AGL16.

Its subcellular location is the nucleus. Functionally, probable transcription factor. Is required, together with TT16/AGL32 for the maternal control of endothelium formation, which is essential for female gametophyte development and fertilization, and seed formation. In Arabidopsis thaliana (Mouse-ear cress), this protein is Agamous-like MADS-box protein AGL11 (AGL11).